Consider the following 236-residue polypeptide: Phosphoribosylaminoimidazole-succinocarboxamide synthase (236 aa).

It belongs to the SAICAR synthetase family.

It carries out the reaction 5-amino-1-(5-phospho-D-ribosyl)imidazole-4-carboxylate + L-aspartate + ATP = (2S)-2-[5-amino-1-(5-phospho-beta-D-ribosyl)imidazole-4-carboxamido]succinate + ADP + phosphate + 2 H(+). The protein operates within purine metabolism; IMP biosynthesis via de novo pathway; 5-amino-1-(5-phospho-D-ribosyl)imidazole-4-carboxamide from 5-amino-1-(5-phospho-D-ribosyl)imidazole-4-carboxylate: step 1/2. This Chlorobium limicola (strain DSM 245 / NBRC 103803 / 6330) protein is Phosphoribosylaminoimidazole-succinocarboxamide synthase.